The chain runs to 498 residues: MRINPTTSGPGVSTLEKKNLGRIAQIIGPVLDVAFPPGKMPNIYNALVVKGRDTVGQQINVTCEVQQLLGNNRVRAVAMSATDGLMRGMEVIDTGAPLSVPVGGATLGRIFNVLGEPVDNLGPVDTRTTSPIHRSAPAFIQLDTKLSIFETGIKVVDLLAPYRRGGKIGLFGGAGVGKTVLIMELINNIAKAHGGVSVFGGVGERTREGNDLYMEMKESGVINEKNISESKVALVYGQMNEPPGARMRVGLTALTMAEYFRDVNEQDVLLFIDNIFRFVQAGSEVSALLGRMPSAVGYQPTLSTEMGTLQERITSTKEGSITSIQAVYVPADDLTDPAPATTFAHLDATTVLSRGLAAKGIYPAVDPLDSTSTMLQPRIVGEEHYETAQRVKQTLQRYKELQDIIAILGLDELSEEDRLTVARARKIERFLSQPFFVAEVFTGSPGKYVGLAETIRGFQLILSGELDGLPEQAFYLVGNIDEATAKAMNLEMESKLKK.

An ATP-binding site is contributed by 172–179; it reads GGAGVGKT.

It belongs to the ATPase alpha/beta chains family. F-type ATPases have 2 components, CF(1) - the catalytic core - and CF(0) - the membrane proton channel. CF(1) has five subunits: alpha(3), beta(3), gamma(1), delta(1), epsilon(1). CF(0) has four main subunits: a(1), b(1), b'(1) and c(9-12).

It localises to the plastid. Its subcellular location is the chloroplast thylakoid membrane. The catalysed reaction is ATP + H2O + 4 H(+)(in) = ADP + phosphate + 5 H(+)(out). In terms of biological role, produces ATP from ADP in the presence of a proton gradient across the membrane. The catalytic sites are hosted primarily by the beta subunits. This chain is ATP synthase subunit beta, chloroplastic, found in Vitis vinifera (Grape).